The primary structure comprises 283 residues: MGEHNLFNPGFVGQLVNINARDAFYLSNFRASGGQLAGLQTLRLSRRDNVCSLPWNPSEACSGYPQSHISGPVTLNHTYNQSCDITRQEDNKCFYSDSACATSGGGDNNSTNLISKEGALDNSSVSITAENGQNNLNGMDNGGSYSKYDCLTPAEQPIPNPRLCRSLESVSGCSFINEGAKTSSGITHSLTSPDIQTSVAALNGGALWYPMHRQTRKKRKPYSKLQLNELEGEFILNEFITRQRRRELSDRLNLTDQQVKIWFQNRRMKKKRLLMREQALSYF.

A DNA-binding region (homeobox) is located at residues 215 to 274 (TRKKRKPYSKLQLNELEGEFILNEFITRQRRRELSDRLNLTDQQVKIWFQNRRMKKKRLL).

This sequence belongs to the Abd-B homeobox family.

It is found in the nucleus. Its function is as follows. Sequence-specific transcription factor which is part of a developmental regulatory system that provides cells with specific positional identities on the anterior-posterior axis. This is Homeobox protein Hox-C12b (hoxc12b) from Danio rerio (Zebrafish).